Consider the following 361-residue polypeptide: Beta-hexosaminidase (361 aa).

Substrate-binding positions include aspartate 69, arginine 77, arginine 144, and 174 to 175 (KH). The Proton donor/acceptor role is filled by histidine 187. Residue aspartate 258 is the Nucleophile of the active site.

The protein belongs to the glycosyl hydrolase 3 family. NagZ subfamily.

Its subcellular location is the cytoplasm. The catalysed reaction is Hydrolysis of terminal non-reducing N-acetyl-D-hexosamine residues in N-acetyl-beta-D-hexosaminides.. It participates in cell wall biogenesis; peptidoglycan recycling. Its function is as follows. Plays a role in peptidoglycan recycling by cleaving the terminal beta-1,4-linked N-acetylglucosamine (GlcNAc) from peptide-linked peptidoglycan fragments, giving rise to free GlcNAc, anhydro-N-acetylmuramic acid and anhydro-N-acetylmuramic acid-linked peptides. The protein is Beta-hexosaminidase of Neisseria meningitidis serogroup C (strain 053442).